We begin with the raw amino-acid sequence, 120 residues long: cAMP-responsive element-binding protein-like 2 (120 aa).

A disordered region spans residues 1–24 (MDDSKVVGGKVKKPGKRGRKPAKI). Residues 10-21 (KVKKPGKRGRKP) are compositionally biased toward basic residues. The bZIP domain maps to 23-86 (KIDLKAKLER…MAMDQGKIPS (64 aa)). Positions 29 to 60 (KLERSRQSARECRARKKLRYQYLEELVSSRER) are basic motif. The leucine-zipper stretch occupies residues 62 to 69 (ICALREEL). The tract at residues 93-120 (TGEEQSKSQQNSSRHMKAGKTDANSNSW) is disordered.

This sequence belongs to the bZIP family. ATF subfamily. As to quaternary structure, interacts with CREB1; regulates CREB1 phosphorylation, stability and transcriptional activity. Interacts with immediate-early (IE) protein BICP22 of bovine herpesvirus-1 (BHV-1). Phosphorylated by AMPK.

The protein resides in the nucleus. In terms of biological role, probable regulator of CREB1 transcriptional activity which is involved in adipose cells differentiation. May also play a regulatory role in the cell cycle. The chain is cAMP-responsive element-binding protein-like 2 (CREBL2) from Bos taurus (Bovine).